A 727-amino-acid polypeptide reads, in one-letter code: NADH-ubiquinone oxidoreductase 75 kDa subunit, mitochondrial (727 aa).

A mitochondrion-targeting transit peptide spans 1–23 (MLRIPVRKALVVLSKSPKGCVRT). Positions 30–108 (NLIEVFVDGQ…GWNILTNSKK (79 aa)) constitute a 2Fe-2S ferredoxin-type domain. [2Fe-2S] cluster contacts are provided by cysteine 64, cysteine 75, and cysteine 78. At lysine 84 the chain carries N6-acetyllysine. Position 92 (cysteine 92) interacts with [2Fe-2S] cluster. Residues 108–147 (KSKKAREGVMEFLLANHPLDCPICDQGGECDLQDQSMMFG) enclose the 4Fe-4S His(Cys)3-ligated-type domain. Positions 124, 128, 131, 137, 176, 179, 182, and 226 each coordinate [4Fe-4S] cluster. The region spanning 245–301 (TRKTESIDVMDAVGSNIVVSTRTGEVMRILPRMHEDINEEWISDKTRFAYDGLKRQR) is the 4Fe-4S Mo/W bis-MGD-type domain. N6-acetyllysine occurs at positions 467, 499, and 709.

The protein belongs to the complex I 75 kDa subunit family. As to quaternary structure, core subunit of respiratory chain NADH dehydrogenase (Complex I) which is composed of 45 different subunits. This is the largest subunit of complex I and it is a component of the iron-sulfur (IP) fragment of the enzyme. Complex I associates with ubiquinol-cytochrome reductase complex (Complex III) to form supercomplexes. Interacts with MDM2 and AKAP1. It depends on [2Fe-2S] cluster as a cofactor. The cofactor is [4Fe-4S] cluster.

It localises to the mitochondrion inner membrane. The enzyme catalyses a ubiquinone + NADH + 5 H(+)(in) = a ubiquinol + NAD(+) + 4 H(+)(out). In terms of biological role, core subunit of the mitochondrial membrane respiratory chain NADH dehydrogenase (Complex I) which catalyzes electron transfer from NADH through the respiratory chain, using ubiquinone as an electron acceptor. Essential for catalysing the entry and efficient transfer of electrons within complex I. Plays a key role in the assembly and stability of complex I and participates in the association of complex I with ubiquinol-cytochrome reductase complex (Complex III) to form supercomplexes. The sequence is that of NADH-ubiquinone oxidoreductase 75 kDa subunit, mitochondrial (NDUFS1) from Pan troglodytes (Chimpanzee).